We begin with the raw amino-acid sequence, 202 residues long: Outer-membrane lipoprotein carrier protein (202 aa).

The first 18 residues, 1 to 18 (MNKLFLILLLIFSHEVFS), serve as a signal peptide directing secretion.

Belongs to the LolA family. Monomer.

Its subcellular location is the periplasm. In terms of biological role, participates in the translocation of lipoproteins from the inner membrane to the outer membrane. Only forms a complex with a lipoprotein if the residue after the N-terminal Cys is not an aspartate (The Asp acts as a targeting signal to indicate that the lipoprotein should stay in the inner membrane). The polypeptide is Outer-membrane lipoprotein carrier protein (Legionella pneumophila (strain Paris)).